Here is a 213-residue protein sequence, read N- to C-terminus: ER lumen protein-retaining receptor erd-2.2 (213 aa).

Over 1-2 (MN) the chain is Lumenal. A helical transmembrane segment spans residues 3–21 (IFRISADMSHLLAIIILLL). The Cytoplasmic portion of the chain corresponds to 22–35 (KIWKSRSCSGISAR). A helical membrane pass occupies residues 36-53 (SQILFALVFTARYLDLFS). Topologically, residues 54-61 (TYISLYNT) are lumenal. Residues 62–80 (TMKITFLAATYATVYLMFF) form a helical membrane-spanning segment. The Cytoplasmic portion of the chain corresponds to 81 to 96 (KFRSTYMRESDTFRVE). Residues 97–110 (LLIVPAAILALLIN) form a helical membrane-spanning segment. Topologically, residues 111–117 (HDFAPFE) are lumenal. Residues 118–137 (LLWTFSIYLEAVAILPQLFL) form a helical membrane-spanning segment. Over 138 to 149 (LQSTGSAEVITA) the chain is Cytoplasmic. Residues 150 to 168 (HYLFALGSYRALYIFNWIY) traverse the membrane as a helical segment. Residues 169–178 (RYYTEDYFDP) lie on the Lumenal side of the membrane. Residues 179-199 (IVVVAGIVQTVLYADFFYLYV) form a helical membrane-spanning segment. Over 200–213 (TRVVQTRKGMELPI) the chain is Cytoplasmic.

This sequence belongs to the ERD2 family.

Its subcellular location is the endoplasmic reticulum membrane. In terms of biological role, required for the retention of luminal endoplasmic reticulum proteins. Determines the specificity of the luminal ER protein retention system. Also required for normal vesicular traffic through the Golgi. This Caenorhabditis elegans protein is ER lumen protein-retaining receptor erd-2.2.